The following is a 251-amino-acid chain: Histocompatibility antigen 60b (251 aa).

Residues 1-24 (MAKSSLSLNWSLLVLLNFLGATLS) form the signal peptide. At 25 to 212 (TGTDSLSCEL…NSDTQGLSFT (188 aa)) the chain is on the extracellular side. N-linked (GlcNAc...) asparagine glycosylation is found at Asn-63, Asn-93, Asn-126, and Asn-189. A helical membrane pass occupies residues 213–233 (WIVIICIGGIVSFMAFMVFAW). The Cytoplasmic segment spans residues 234–251 (CMLKKKKGALCCSSSSTT).

The protein belongs to the NKG2D ligand family. As to expression, in strain C57BL/6J, strongly expressed in cardiac muscle and skeletal muscle, with lower expression levels in spleen, liver, kidney and thymus. In strain BALB/cJ, weakly expressed in cardiac muscle, spleen, kidney and thymus.

It is found in the cell membrane. In terms of biological role, ligand for the KLRK1 immunosurveillance receptor. Binding to KLRK1 stimulates cell lysis in vitro. This is Histocompatibility antigen 60b from Mus musculus (Mouse).